The sequence spans 123 residues: Class I hydrophobin pri2 (123 aa).

Positions 1 to 18 (MVAIKSLAILALPVMAMA) are cleaved as a signal peptide. 4 cysteine pairs are disulfide-bonded: Cys31–Cys102, Cys38–Cys96, Cys39–Cys84, and Cys103–Cys116. Asn33 and Asn40 each carry an N-linked (GlcNAc...) asparagine glycan.

This sequence belongs to the fungal hydrophobin family. As to quaternary structure, self-assembles to form functional amyloid fibrils called rodlets. Self-assembly into fibrillar rodlets occurs spontaneously at hydrophobic:hydrophilic interfaces and the rodlets further associate laterally to form amphipathic monolayers.

The protein localises to the secreted. It localises to the cell wall. In terms of biological role, aerial growth, conidiation, and dispersal of filamentous fungi in the environment rely upon a capability of their secreting small amphipathic proteins called hydrophobins (HPBs) with low sequence identity. Class I can self-assemble into an outermost layer of rodlet bundles on aerial cell surfaces, conferring cellular hydrophobicity that supports fungal growth, development and dispersal; whereas Class II form highly ordered films at water-air interfaces through intermolecular interactions but contribute nothing to the rodlet structure. This chain is Class I hydrophobin pri2, found in Cyclocybe aegerita (Black poplar mushroom).